The sequence spans 244 residues: ATP synthase subunit 4, mitochondrial (244 aa).

Residues 1–36 constitute a mitochondrion transit peptide; the sequence is MASRLAKSAICAARVRPVLSSRTIPAAATTLTSTRS.

This sequence belongs to the eukaryotic ATPase B chain family. In terms of assembly, F-type ATPases have 2 components, CF(1) - the catalytic core - and CF(0) - the membrane proton channel. In yeast, the dimeric form of ATP synthase consists of 17 polypeptides: alpha, beta, gamma, delta, epsilon, 4 (B), 5 (OSCP), 6 (A), 8, 9 (C), d, E (Tim11), f, g, h, i/j and k.

The protein resides in the mitochondrion. Its subcellular location is the mitochondrion inner membrane. Its function is as follows. Mitochondrial membrane ATP synthase (F(1)F(0) ATP synthase or Complex V) produces ATP from ADP in the presence of a proton gradient across the membrane which is generated by electron transport complexes of the respiratory chain. F-type ATPases consist of two structural domains, F(1) - containing the extramembraneous catalytic core, and F(0) - containing the membrane proton channel, linked together by a central stalk and a peripheral stalk. During catalysis, ATP synthesis in the catalytic domain of F(1) is coupled via a rotary mechanism of the central stalk subunits to proton translocation. Part of the complex F(0) domain and the peripheric stalk, which acts as a stator to hold the catalytic alpha(3)beta(3) subcomplex and subunit a/ATP6 static relative to the rotary elements. The sequence is that of ATP synthase subunit 4, mitochondrial (ATP4) from Paracoccidioides brasiliensis.